A 380-amino-acid polypeptide reads, in one-letter code: MTAANVPGSSIGVDALPIRENLRGKSAYGAPQLTVPVQLNTNENPHPPTKALVDDVAESVREAARELHRYPDRDAVALRTDLAAYLVRQTGVPVTVDNVWAANGSNEILQQLLQAFGGPGRSAMGFVPSYSMHPIIADGTETEWLPIFRRADFALDVDAATAAITERRPDVVFVTSPNNPTGHSVGIAELRRVLDAAPGIVIVDEAYAEFSDAPSALTLIDEYPSKLVVSRTMSKAFAFAGGRLGYLAAAPAFIEALLLVRLPYHLSVVTQAAARAALRHANETLASVHALATERVRVSKALDDTGFRVIPSDANFILFGEFTDSAHAWRAYLDRGVLIRDVGIPGYLRATVGLASENDAFIVASDEIAATELTSSGDRG.

Lys235 carries the N6-(pyridoxal phosphate)lysine modification.

The protein belongs to the class-II pyridoxal-phosphate-dependent aminotransferase family. Histidinol-phosphate aminotransferase subfamily. Homodimer. Pyridoxal 5'-phosphate serves as cofactor.

It catalyses the reaction L-histidinol phosphate + 2-oxoglutarate = 3-(imidazol-4-yl)-2-oxopropyl phosphate + L-glutamate. It participates in amino-acid biosynthesis; L-histidine biosynthesis; L-histidine from 5-phospho-alpha-D-ribose 1-diphosphate: step 7/9. This Rhodococcus jostii (strain RHA1) protein is Histidinol-phosphate aminotransferase.